The chain runs to 829 residues: Cap-specific mRNA (nucleoside-2'-O-)-methyltransferase 1 (829 aa).

The segment at Met-1 to Ala-68 is disordered. Positions Lys-2–Lys-16 match the Bipartite nuclear localization signal motif. The segment covering Gln-31–Leu-44 has biased composition (low complexity). The segment covering Ser-55–Ala-68 has biased composition (polar residues). The G-patch domain maps to Tyr-79–Lys-125. Substrate is bound by residues Lys-195–Asp-199 and Arg-210. Residues Phe-223–Lys-442 form the RrmJ-type SAM-dependent 2'-O-MTase domain. An S-adenosyl-L-methionine-binding site is contributed by Asn-226. Lys-231 is an active-site residue. S-adenosyl-L-methionine-binding positions include Cys-269 to Phe-275 and Asp-327 to Ile-328. Asp-356 is a catalytic residue. Residue Asn-366–Gln-368 participates in substrate binding. The active-site Proton acceptor is Lys-396. Asn-431 contacts substrate. The WW domain occupies Lys-745 to Thr-779.

The protein resides in the nucleus. The enzyme catalyses a 5'-end (N(7)-methyl 5'-triphosphoguanosine)-ribonucleoside in mRNA + S-adenosyl-L-methionine = a 5'-end (N(7)-methyl 5'-triphosphoguanosine)-(2'-O-methyl-ribonucleoside) in mRNA + S-adenosyl-L-homocysteine + H(+). In terms of biological role, S-adenosyl-L-methionine-dependent methyltransferase that mediates mRNA cap1 2'-O-ribose methylation to the 5'-cap structure of mRNAs. Methylates the ribose of the first nucleotide of a m(7)GpppG-capped mRNA and small nuclear RNA (snRNA) to produce m(7)GpppRm (cap1). Displays a preference for cap0 transcripts. Cap1 modification is linked to higher levels of translation. May be involved in the interferon response pathway. This chain is Cap-specific mRNA (nucleoside-2'-O-)-methyltransferase 1 (cmtr1), found in Danio rerio (Zebrafish).